The sequence spans 417 residues: MRGILILVALGAATIPQASAAPNDRQQSMIDLPLKLYQNGFNTDLVTIGTPAQATRLFVDWTWIGAYTVSTKCNHTNNAYGCLAPGQKLFNETQSTSLVNQTNLYPTRTWNPNHFFMDKDLTAVFASDIYRVGDRESRLTLQLSQLNWKASFPYPFSGIFGMSPVFKSDNMSIQAPFHQMVQQKKFHSGLTSFIYCYSDEPGYKSPSKERCNGNDGIQTLGGYHHRDIGWRGIEWINTIVFPIVNDIDFIYNPAFYNYWSIPVTKHFIGNEEQALNTTTGSAVVFDHASYGRGAAMSVASYRRLVSITNAQPVNLTMATLPNNGKQKFYSVDCDRVDSFPAVKYQFGKWRRVWSIEARHYISKAKTMDGKDVCVLNVRVIGQGENFVIGNLGENFAKDKVILFDFEKNRVGLADFRD.

Residues 1–20 (MRGILILVALGAATIPQASA) form the signal peptide. The region spanning 42-413 (NTDLVTIGTP…DFEKNRVGLA (372 aa)) is the Peptidase A1 domain. N74, N91, N100, N170, N276, and N314 each carry an N-linked (GlcNAc...) asparagine glycan. C333 and C373 are oxidised to a cystine.

It belongs to the peptidase A1 family.

The protein localises to the secreted. Functionally, probable secreted aspartic protease that supplies the fungus with nutrient amino acids. May be able to degrade the selected host's proteins involved in the immune defense. This is Probable secreted aspartic protease ARB_07536 from Arthroderma benhamiae (strain ATCC MYA-4681 / CBS 112371) (Trichophyton mentagrophytes).